The primary structure comprises 107 residues: Phosphoribosyl-ATP pyrophosphatase (107 aa).

The protein belongs to the PRA-PH family.

The protein resides in the cytoplasm. It carries out the reaction 1-(5-phospho-beta-D-ribosyl)-ATP + H2O = 1-(5-phospho-beta-D-ribosyl)-5'-AMP + diphosphate + H(+). It functions in the pathway amino-acid biosynthesis; L-histidine biosynthesis; L-histidine from 5-phospho-alpha-D-ribose 1-diphosphate: step 2/9. In Zymomonas mobilis subsp. mobilis (strain ATCC 31821 / ZM4 / CP4), this protein is Phosphoribosyl-ATP pyrophosphatase.